Here is a 367-residue protein sequence, read N- to C-terminus: Forkhead box protein I1-B (367 aa).

Disordered stretches follow at residues 1–21 (MNPVQQPAQHRSPASLLHLPH) and 213–274 (DNGN…PPTV). Positions 128–222 (RPPYSYSALI…DNGNFRRKRK (95 aa)) form a DNA-binding region, fork-head. Residues 233–246 (AKRDEDHLNPKGKE) show a composition bias toward basic and acidic residues. Residues 252–274 (TPSSSPEVLSPTGHSKSPSPPTV) are compositionally biased toward polar residues.

In terms of tissue distribution, initially localized to the animal hemisphere (the presumptive ectoderm) of early-mid blastula embryos. Becomes restricted to head placodes, excluding the otic placodes, by the tailbud stages.

The protein localises to the nucleus. Its function is as follows. Transcription factor. Essential for ventral specification of the early cephalic (head) ectoderm during gastrulation, playing a role in the 'non-neural' versus 'neural' cell fate choice. Binds to DNA via the target sequence 5'-[AG]TAAA[CT]A-3', with 5'-ATAAACA-3' being the preferred binding site. This Xenopus laevis (African clawed frog) protein is Forkhead box protein I1-B (foxi1-b).